A 675-amino-acid polypeptide reads, in one-letter code: DNA ligase (675 aa).

Residues 33–37 (DAEYD), 82–83 (SL), and glutamate 115 each bind NAD(+). The N6-AMP-lysine intermediate role is filled by lysine 117. Residues arginine 138, glutamate 175, lysine 293, and lysine 317 each coordinate NAD(+). Residues cysteine 411, cysteine 414, cysteine 429, and cysteine 435 each contribute to the Zn(2+) site. The BRCT domain occupies 594-675 (IADNPLKDKT…LIGYFTTIVS (82 aa)).

It belongs to the NAD-dependent DNA ligase family. LigA subfamily. It depends on Mg(2+) as a cofactor. Mn(2+) is required as a cofactor.

It catalyses the reaction NAD(+) + (deoxyribonucleotide)n-3'-hydroxyl + 5'-phospho-(deoxyribonucleotide)m = (deoxyribonucleotide)n+m + AMP + beta-nicotinamide D-nucleotide.. In terms of biological role, DNA ligase that catalyzes the formation of phosphodiester linkages between 5'-phosphoryl and 3'-hydroxyl groups in double-stranded DNA using NAD as a coenzyme and as the energy source for the reaction. It is essential for DNA replication and repair of damaged DNA. This Glaesserella parasuis serovar 5 (strain SH0165) (Haemophilus parasuis) protein is DNA ligase.